The chain runs to 881 residues: Rho GTPase-activating protein 17 (881 aa).

One can recognise a BAR domain in the interval 14-246 (QTVGRAEKTE…MRAHQDKWAE (233 aa)). One can recognise a Rho-GAP domain in the interval 252 to 442 (TPLEEHLKRS…PIIQHADWFF (191 aa)). Residues 459–475 (TPSSNHSFHTGNDSDSG) show a composition bias toward polar residues. Residues 459–482 (TPSSNHSFHTGNDSDSGTLERKRP) form a disordered region. Phosphoserine is present on residues S484 and S575. The segment at 511–881 (GGTLNRKHIS…IDNDTESTAL (371 aa)) is disordered. A compositionally biased stretch (polar residues) spans 592–617 (RNNSQIASGQNQPQAAAGSHQLSMGQ). Pro residues predominate over residues 637–650 (APAPPKPGNPPPGH). Over residues 653–664 (GQSSSGTSQHPP) the composition is skewed to low complexity. Positions 665–678 (SLSPKPPTRSPSPP) are enriched in pro residues. 2 positions are modified to phosphothreonine: T679 and T682. Residues 679–698 (TQHTGQPPGQPSAPSQLSAP) show a composition bias toward low complexity. S702 and S704 each carry phosphoserine. Pro residues-rich tracts occupy residues 712–721 (NHPPPQPPTQ), 752–764 (HTPPQTPTPPSTP), and 806–816 (RPSVPPPPQPP). Phosphothreonine is present on residues T753, T757, and T759. An SH3-binding motif is present at residues 753–766 (TPPQTPTPPSTPPL). A Phosphoserine modification is found at S762. The residue at position 763 (T763) is a Phosphothreonine. Over residues 822–844 (GDSSLTNTAPTASKIVTDSNSRV) the composition is skewed to polar residues. Basic and acidic residues predominate over residues 845 to 865 (SEPHRSIFPEMHSDSASKDVP). Acidic residues predominate over residues 872–881 (IDNDTESTAL).

As to quaternary structure, component of a complex whose core is composed of ARHGAP17, AMOT, PALS1, PATJ and PARD3/PAR3. Interacts with NHERF1, FNBP1, TRIP10, CAPZA (CAPZA1, CAPZA2 or CAPZA3), CAPZB, CD2AP and SH3KBP1/CIN85. In terms of tissue distribution, ubiquitously expressed. Expressed at higher level in heart and placenta.

Its subcellular location is the membrane. The protein localises to the cytoplasm. The protein resides in the cell junction. It localises to the tight junction. In terms of biological role, rho GTPase-activating protein involved in the maintenance of tight junction by regulating the activity of CDC42, thereby playing a central role in apical polarity of epithelial cells. Specifically acts as a GTPase activator for the CDC42 GTPase by converting it to an inactive GDP-bound state. The complex formed with AMOT acts by regulating the uptake of polarity proteins at tight junctions, possibly by deciding whether tight junction transmembrane proteins are recycled back to the plasma membrane or sent elsewhere. Participates in the Ca(2+)-dependent regulation of exocytosis, possibly by catalyzing GTPase activity of Rho family proteins and by inducing the reorganization of the cortical actin filaments. Acts as a GTPase activator in vitro for RAC1. The protein is Rho GTPase-activating protein 17 (ARHGAP17) of Homo sapiens (Human).